The chain runs to 142 residues: Nucleoside diphosphate kinase (142 aa).

Residues K11, F59, R87, T93, R104, and N114 each contribute to the ATP site. The active-site Pros-phosphohistidine intermediate is H117.

It belongs to the NDK family. Homotetramer. It depends on Mg(2+) as a cofactor.

It is found in the cytoplasm. It carries out the reaction a 2'-deoxyribonucleoside 5'-diphosphate + ATP = a 2'-deoxyribonucleoside 5'-triphosphate + ADP. It catalyses the reaction a ribonucleoside 5'-diphosphate + ATP = a ribonucleoside 5'-triphosphate + ADP. Functionally, major role in the synthesis of nucleoside triphosphates other than ATP. The ATP gamma phosphate is transferred to the NDP beta phosphate via a ping-pong mechanism, using a phosphorylated active-site intermediate. The polypeptide is Nucleoside diphosphate kinase (Yersinia pseudotuberculosis serotype O:1b (strain IP 31758)).